We begin with the raw amino-acid sequence, 298 residues long: HTH-type transcriptional regulator ArgP (298 aa).

Residues 4–60 (LDYKWIEALDAVVYQGSFERAAEHLFVSQSAISQRIKQLEKFLAQPVLIREQPPKPT) form the HTH lysR-type domain. The H-T-H motif DNA-binding region spans 21 to 40 (FERAAEHLFVSQSAISQRIK).

The protein belongs to the LysR transcriptional regulatory family. As to quaternary structure, homodimer.

In terms of biological role, controls the transcription of genes involved in arginine and lysine metabolism. This Vibrio parahaemolyticus serotype O3:K6 (strain RIMD 2210633) protein is HTH-type transcriptional regulator ArgP.